The chain runs to 798 residues: Penicillin-binding protein 1A (798 aa).

Topologically, residues 1–9 (MIKKIVTTC) are cytoplasmic. Residues 10–30 (FGLVLGLCVFGVGLVAIAILV) traverse the membrane as a helical; Signal-anchor for type II membrane protein segment. Residues 31–798 (TYPKLPSLDS…SKQPQLDSLF (768 aa)) lie on the Periplasmic side of the membrane. The interval 50–218 (LTIYSADGEV…SAYNPIVNPE (169 aa)) is transglycosylase. Catalysis depends on glutamate 88, which acts as the Proton donor; for transglycosylase activity. The segment at 414 to 700 (VVVQEPLLQA…GTIAVPVWVD (287 aa)) is transpeptidase. The Acyl-ester intermediate; for transpeptidase activity role is filled by serine 461. Residues 751-798 (SRRIREDKEAGAEDVERGAADEVRQEVQETPVLPSNTGSKQPQLDSLF) form a disordered region. A compositionally biased stretch (basic and acidic residues) spans 753–777 (RIREDKEAGAEDVERGAADEVRQEV). Residues 783–798 (LPSNTGSKQPQLDSLF) show a composition bias toward polar residues.

The protein in the N-terminal section; belongs to the glycosyltransferase 51 family. This sequence in the C-terminal section; belongs to the transpeptidase family.

It localises to the cell inner membrane. The enzyme catalyses [GlcNAc-(1-&gt;4)-Mur2Ac(oyl-L-Ala-gamma-D-Glu-L-Lys-D-Ala-D-Ala)](n)-di-trans,octa-cis-undecaprenyl diphosphate + beta-D-GlcNAc-(1-&gt;4)-Mur2Ac(oyl-L-Ala-gamma-D-Glu-L-Lys-D-Ala-D-Ala)-di-trans,octa-cis-undecaprenyl diphosphate = [GlcNAc-(1-&gt;4)-Mur2Ac(oyl-L-Ala-gamma-D-Glu-L-Lys-D-Ala-D-Ala)](n+1)-di-trans,octa-cis-undecaprenyl diphosphate + di-trans,octa-cis-undecaprenyl diphosphate + H(+). The catalysed reaction is Preferential cleavage: (Ac)2-L-Lys-D-Ala-|-D-Ala. Also transpeptidation of peptidyl-alanyl moieties that are N-acyl substituents of D-alanine.. It participates in cell wall biogenesis; peptidoglycan biosynthesis. In terms of biological role, cell wall formation. Synthesis of cross-linked peptidoglycan from the lipid intermediates. The enzyme has a penicillin-insensitive transglycosylase N-terminal domain (formation of linear glycan strands) and a penicillin-sensitive transpeptidase C-terminal domain (cross-linking of the peptide subunits). The polypeptide is Penicillin-binding protein 1A (mrcA) (Neisseria cinerea).